We begin with the raw amino-acid sequence, 137 residues long: Large ribosomal subunit protein uL16 (137 aa).

Positions Met-1–Arg-16 are enriched in basic residues. The disordered stretch occupies residues Met-1–Gln-22.

The protein belongs to the universal ribosomal protein uL16 family. In terms of assembly, part of the 50S ribosomal subunit.

In terms of biological role, binds 23S rRNA and is also seen to make contacts with the A and possibly P site tRNAs. This is Large ribosomal subunit protein uL16 from Idiomarina loihiensis (strain ATCC BAA-735 / DSM 15497 / L2-TR).